The chain runs to 171 residues: Myosin regulatory light chain 12B (171 aa).

T18 is subject to Phosphothreonine; by MLCK and ZIPK/DAPK3. S19 bears the Phosphoserine; by MLCK and ZIPK/DAPK3 mark. EF-hand domains are found at residues 28–63 (SQIQ…LGKN), 97–132 (DPED…MGDR), and 133–168 (FTDE…GAKD). 4 residues coordinate Ca(2+): D41, N43, D45, and D52.

Myosin is a hexamer of 2 heavy chains and 4 light chains: interacts with myosin heavy chain MYO19. Post-translationally, phosphorylation increases the actin-activated myosin ATPase activity and thereby regulates the contractile activity. It is required to generate the driving force in the migration of the cells but not necessary for localization of myosin-2 at the leading edge. Phosphorylation is reduced following epigallocatechin-3-O-gallate treatment.

Myosin regulatory subunit that plays an important role in regulation of both smooth muscle and nonmuscle cell contractile activity via its phosphorylation. Phosphorylation triggers actin polymerization in vascular smooth muscle. Implicated in cytokinesis, receptor capping, and cell locomotion. The sequence is that of Myosin regulatory light chain 12B (MYL12B) from Bos taurus (Bovine).